The sequence spans 145 residues: Secreted RxLR effector protein PSE1 (145 aa).

The N-terminal stretch at Met-1–Ser-21 is a signal peptide. The RxLR-dEER motif lies at Arg-53 to Arg-73.

It belongs to the RxLR effector family.

It localises to the secreted. Its subcellular location is the host cell. Its function is as follows. Secreted effector that impairs both plant effector-triggered immunity and pathogen-associated molecular patterns (PAMP)-triggered immunity (PTI). Suppresses plant cell death as a part of the plant defense responses. Facilitates plant infection by altering the auxin content at the roots penetration points of the of the pathogen. The polypeptide is Secreted RxLR effector protein PSE1 (Phytophthora nicotianae (Potato buckeye rot agent)).